A 719-amino-acid chain; its full sequence is MVERIINSEDISLLISGRQSNPHKFLGIISESSSQDRIILFRPGAHFVAIELQGNIAQATHHHSGIFSLVTPKGTLPHDYRIYHQNGLLAHDPYAFSPLWGEMDSFLFHQGTHYKIYERMGAIPCDVGGILGVLFVVWAPHAQRVSVVGDFNYWNGLVNPLRKVSDSGVWELFIPGLDEGTLYKWELVTASGEVLIKTDPYGKGFDIPPQVTSRVINSDRYTWHDQKWMENRKNTKDQPLAIYEVHVGSWQWDNGRPLGYRELAKRLAQYCKELHYTHVELLPITEHPLNESWGYQVTGYYAPTWRYGSFQDFQFFVDHLHCEGIGVILDWVPGHFPTDSFALASFDGEALYESVDHKDPLHPHWHTYTFDYRCSEVVNFLIGSALFWLDKMHIDGLRVDAVTSMLYLDYGRKAGEWSPNIYGGNENLDAIEFIKHFNSVVHREFPAVLTFAEESTDFPKVTESVDSGGLGFDYKWNLGWMHDTFRYIKVDPIFRSYHHNDLTFSLWYAFNERYLLPLSHDEVVHGKGSLLQKIPGDTWTKFAHMRLLLSYQICQPGKKLVFMGGEFAQWKEWSPDNSLDWHLLDNPYHASLHKCVAKMNALYCELPYFWKGDHKQESFLWVDFKDTKNNVISYYRFSGEDRSSALLCIHHFSSEYFPSYVLHCQGIKTCELLFNSDDISFGGSGKGNRLPILCVDHNIPWGIAIELPPLATLIFQVSF.

Residue Asp400 is the Nucleophile of the active site. The active-site Proton donor is the Glu453.

Belongs to the glycosyl hydrolase 13 family. GlgB subfamily. Monomer.

The enzyme catalyses Transfers a segment of a (1-&gt;4)-alpha-D-glucan chain to a primary hydroxy group in a similar glucan chain.. The protein operates within glycan biosynthesis; glycogen biosynthesis. Catalyzes the formation of the alpha-1,6-glucosidic linkages in glycogen by scission of a 1,4-alpha-linked oligosaccharide from growing alpha-1,4-glucan chains and the subsequent attachment of the oligosaccharide to the alpha-1,6 position. This Chlamydia caviae (strain ATCC VR-813 / DSM 19441 / 03DC25 / GPIC) (Chlamydophila caviae) protein is 1,4-alpha-glucan branching enzyme GlgB.